The chain runs to 443 residues: Aklavinone 7-beta-L-rhodosaminyltransferase (443 aa).

The N-terminal stretch at 1-23 (MRVLLTSFALDAHFNGSVPLAWA) is a signal peptide.

This sequence belongs to the glycosyltransferase 28 family.

It carries out the reaction dTDP-beta-L-rhodosamine + aklavinone = aclacinomycin T + dTDP + 2 H(+). Its activity is regulated as follows. The activity of AknS is substantially increased by the addition of the accessory protein AknT. In terms of biological role, involved in the biosynthesis of the anthracycline antitumor agent aclacinomycin A. Catalyzes the transfer of the proximal deoxyhexose, L-rhodosamine, from dTDP-beta-L-rhodosamine to the C7-OH of aklavinone aglycone to yield aclacinomycin T (rhodosaminyl-aklavinone). It can also use dTDP-2-deoxy-beta-L-fucose, TDP-2-deoxyfucose, dTDP-4-amino-2-deoxyrhamnose, TDP-L-rhodosamine as sugar donor and epsilon-rhodomycinone as sugar acceptor. The chain is Aklavinone 7-beta-L-rhodosaminyltransferase from Streptomyces galilaeus.